Consider the following 500-residue polypeptide: Xylan O-acetyltransferase 2 (500 aa).

At 1 to 25 the chain is on the cytoplasmic side; the sequence is MGLPGRRNPLLSARRAAASLRRSRR. The helical; Signal-anchor for type II membrane protein transmembrane segment at 26–43 threads the bilayer; that stretch reads LPVYVAAVFFVASVLLMF. Topologically, residues 44 to 500 are lumenal; the sequence is RDEILYLTTA…RPPAAAGHVA (457 aa). The tract at residues 84–116 is disordered; that stretch reads PVLLGHGGKPEKHHSVTERHRPKVSAKRRPNKK. Basic and acidic residues predominate over residues 91–102; it reads GKPEKHHSVTER. Over residues 103–116 the composition is skewed to basic residues; the sequence is HRPKVSAKRRPNKK. Disulfide bonds link Cys-143-Cys-194, Cys-165-Cys-231, Cys-174-Cys-472, and Cys-388-Cys-468. 2 N-linked (GlcNAc...) asparagine glycosylation sites follow: Asn-144 and Asn-154. The GDS motif signature appears at 218-220; it reads GDS. The active-site Nucleophile is the Ser-220. Asn-260 and Asn-416 each carry an N-linked (GlcNAc...) asparagine glycan. Asp-467 functions as the Proton donor in the catalytic mechanism. Residues 467-470 carry the DXXH motif motif; the sequence is DCIH. His-470 serves as the catalytic Proton acceptor.

It belongs to the PC-esterase family. TBL subfamily. Expressed at low levels in roots and leaves.

It is found in the golgi apparatus membrane. Its function is as follows. Xylan acetyltransferase required for 2-O- and 3-O-monoacetylation of xylosyl residues in xylan. Catalyzes the 2-O-acetylation of xylan, followed by nonenzymatic acetyl migration to the O-3 position, resulting in products that are monoacetylated at both O-2 and O-3 positions. The sequence is that of Xylan O-acetyltransferase 2 from Oryza sativa subsp. japonica (Rice).